Here is a 185-residue protein sequence, read N- to C-terminus: DAN domain family member 5 (185 aa).

Residues 1-23 form the signal peptide; sequence MFRSQFTTLLGLFSGAWLPTGSG. N-linked (GlcNAc...) asparagine glycosylation is present at Asn-39. 4 cysteine pairs are disulfide-bonded: Cys-97/Cys-144, Cys-111/Cys-158, Cys-121/Cys-179, and Cys-125/Cys-181. The 86-residue stretch at 97-182 folds into the CTCK domain; sequence CKALSFVQVI…TVLVQKCQCR (86 aa).

This sequence belongs to the DAN family. As to expression, expressed throughout the neural retina and in the photoreceptor nuclear layer. In the retina, widely expressed in inner nuclear layer, as well as in the ganglion cell layer.

The protein resides in the secreted. Antagonist of the extracellular signaling protein NODAL, which is required for correct left-right patterning during embryonic development. Antagonist of BMP4 signaling. Antagonist of TGF-beta signaling. Independently of its role in left-right axis establishment, plays a role during heart development, possibly through the regulation of TGF-beta/Nodal signaling pathway. Displays anti-angiogenic activity by inhibiting endothelial sprouting, migration, and proliferation. Once internalized by endothelial cells, may alter their redox and glycolytic balance. This is DAN domain family member 5 (Dand5) from Mus musculus (Mouse).